Consider the following 374-residue polypeptide: Patatin-2-Kuras 4 (374 aa).

The signal sequence occupies residues 1 to 11 (MILATTSSTCA). One can recognise a PNPLA domain in the interval 20 to 217 (LSIDGGGIKG…TVGDPALLSL (198 aa)). Residues 24-29 (GGGIKG) carry the GXGXXG motif. The GXSXG signature appears at 63 to 67 (GTSTG). Ser-65 acts as the Nucleophile in catalysis. An N-linked (GlcNAc...) asparagine glycan is attached at Asn-103. Residue Asp-203 is the Proton acceptor of the active site. The DGA/G motif lies at 203-205 (DGG). Positions 309–372 (ENALTGTTTE…DRKKLRANKA (64 aa)) form a coiled coil.

It belongs to the patatin family.

It is found in the vacuole. Probable lipolytic acyl hydrolase (LAH), an activity which is thought to be involved in the response of tubers to pathogens. The protein is Patatin-2-Kuras 4 (pat2-k4) of Solanum tuberosum (Potato).